Here is a 444-residue protein sequence, read N- to C-terminus: N-succinylarginine dihydrolase (444 aa).

Substrate is bound by residues 19-28 (AGLSFGNVAS), Asn-110, and 137-138 (HR). The active site involves Glu-174. Arg-214 contributes to the substrate binding site. His-250 is a catalytic residue. Substrate-binding residues include Asp-252 and Asn-362. Cys-368 (nucleophile) is an active-site residue.

It belongs to the succinylarginine dihydrolase family. As to quaternary structure, homodimer.

It carries out the reaction N(2)-succinyl-L-arginine + 2 H2O + 2 H(+) = N(2)-succinyl-L-ornithine + 2 NH4(+) + CO2. It participates in amino-acid degradation; L-arginine degradation via AST pathway; L-glutamate and succinate from L-arginine: step 2/5. Its function is as follows. Catalyzes the hydrolysis of N(2)-succinylarginine into N(2)-succinylornithine, ammonia and CO(2). The sequence is that of N-succinylarginine dihydrolase from Shewanella denitrificans (strain OS217 / ATCC BAA-1090 / DSM 15013).